The chain runs to 97 residues: Putative defensin-like protein 237 (97 aa).

Positions 1 to 23 are cleaved as a signal peptide; it reads MRHATSPIVFCFLIFLVMNHVKG. 4 disulfides stabilise this stretch: Cys30-Cys94, Cys40-Cys71, Cys48-Cys84, and Cys69-Cys86.

The protein belongs to the DEFL family.

It localises to the secreted. This is Putative defensin-like protein 237 (SCRL21) from Arabidopsis thaliana (Mouse-ear cress).